We begin with the raw amino-acid sequence, 186 residues long: Tumor necrosis factor alpha-induced protein 8-like protein 1 (186 aa).

This sequence belongs to the TNFAIP8 family. Interacts with FBXW5; TNFAIP8L1 competes with TSC2 to bind FBXW5 increasing TSC2 stability by preventing its ubiquitination. As to expression, detected in wide variety tissues, such as neurons in brain, hepatocytes, germ cells of female and male reproductive organs, muscular tissues and variety types of cells of the epithelial origin (at protein level).

The protein resides in the cytoplasm. Functionally, acts as a negative regulator of mTOR activity. This chain is Tumor necrosis factor alpha-induced protein 8-like protein 1 (Tnfaip8l1), found in Mus musculus (Mouse).